The chain runs to 655 residues: Sphingomyelin phosphodiesterase 3 (655 aa).

At 1-10 the chain is on the cytoplasmic side; it reads MVLYTTPFPN. An intramembrane region (helical) is located at residues 11–31; that stretch reads SCLSALHCVSWALIFPCYWLV. The Cytoplasmic segment spans residues 32-64; that stretch reads DRLAASFIPTTYEKRQRADDPCCLQLLCTALFT. 3 S-palmitoyl cysteine lipidation sites follow: Cys53, Cys54, and Cys59. An intramembrane region (helical) is located at residues 65 to 85; it reads PIYLALLVASLPFAFLGFLFW. Residues 86 to 655 lie on the Cytoplasmic side of the membrane; it reads SPLQSARRPY…LMVSSGEEEA (570 aa). Ser178 bears the Phosphoserine mark. The tract at residues 210 to 319 is disordered; sequence VEYKGDGGRH…DTSASGEPGA (110 aa). 2 stretches are compositionally biased toward basic and acidic residues: residues 212 to 222 and 248 to 257; these read YKGDGGRHPGD and GGEEGGRPPE. Polar residues predominate over residues 279 to 299; that stretch reads TPNHNQQDGDSGSLGSPSASR. Position 291 is a phosphoserine (Ser291). Glu364 contributes to the Mg(2+) binding site. S-palmitoyl cysteine attachment occurs at residues Cys397 and Cys398. The active-site Proton acceptor is His639.

It belongs to the neutral sphingomyelinase family. Mg(2+) serves as cofactor. Post-translationally, palmitoylated, palmitoylation-deficient proteins are targeted for lysosomal degradation. Predominantly expressed in brain.

The protein resides in the golgi apparatus membrane. Its subcellular location is the cell membrane. It carries out the reaction a sphingomyelin + H2O = phosphocholine + an N-acylsphing-4-enine + H(+). The enzyme catalyses N-(15Z-tetracosenoyl)sphing-4-enine-1-phosphocholine + H2O = N-(15Z-tetracosenoyl)-sphing-4-enine + phosphocholine + H(+). It catalyses the reaction N-(tetracosanoyl)-sphing-4-enine-1-phosphocholine + H2O = N-tetracosanoyl-sphing-4-enine + phosphocholine + H(+). The catalysed reaction is an N-(acyl)-sphingosylphosphocholine + H2O = an N-acyl-sphingoid base + phosphocholine + H(+). It carries out the reaction 1-hexadecanoyl-sn-glycero-3-phosphocholine + H2O = 1-hexadecanoyl-sn-glycerol + phosphocholine + H(+). The enzyme catalyses 1-O-octadecyl-sn-glycero-3-phosphocholine + H2O = 1-O-octadecyl-sn-glycerol + phosphocholine + H(+). It catalyses the reaction a sphingosylphosphocholine + H2O = a sphingoid base + phosphocholine + H(+). The catalysed reaction is N-(hexadecanoyl)-sphing-4-enine-1-phosphocholine + H2O = N-hexadecanoylsphing-4-enine + phosphocholine + H(+). It functions in the pathway lipid metabolism; sphingolipid metabolism. Inhibited by nSMase inhibitor GW4869. Binding of anionic phospholipids (APLs) such as phosphatidylserine (PS) and phosphatidic acid (PA) increases enzymatic activity. In terms of biological role, catalyzes the hydrolysis of sphingomyelin to form ceramide and phosphocholine. Ceramide mediates numerous cellular functions, such as apoptosis and growth arrest, and is capable of regulating these 2 cellular events independently. Also hydrolyzes sphingosylphosphocholine. Regulates the cell cycle by acting as a growth suppressor in confluent cells. Probably acts as a regulator of postnatal development and participates in bone and dentin mineralization. Binds to anionic phospholipids (APLs) such as phosphatidylserine (PS) and phosphatidic acid (PA) that modulate enzymatic activity and subcellular location. May be involved in IL-1-beta-induced JNK activation in hepatocytes. May act as a mediator in transcriptional regulation of NOS2/iNOS via the NF-kappa-B activation under inflammatory conditions. The chain is Sphingomyelin phosphodiesterase 3 from Homo sapiens (Human).